The sequence spans 316 residues: Transaldolase (316 aa).

Catalysis depends on K132, which acts as the Schiff-base intermediate with substrate.

Belongs to the transaldolase family. Type 1 subfamily. As to quaternary structure, homodimer.

It localises to the cytoplasm. The enzyme catalyses D-sedoheptulose 7-phosphate + D-glyceraldehyde 3-phosphate = D-erythrose 4-phosphate + beta-D-fructose 6-phosphate. The protein operates within carbohydrate degradation; pentose phosphate pathway; D-glyceraldehyde 3-phosphate and beta-D-fructose 6-phosphate from D-ribose 5-phosphate and D-xylulose 5-phosphate (non-oxidative stage): step 2/3. In terms of biological role, transaldolase is important for the balance of metabolites in the pentose-phosphate pathway. This chain is Transaldolase, found in Vibrio vulnificus (strain YJ016).